The following is a 465-amino-acid chain: Alpha-2A adrenergic receptor (465 aa).

At 1 to 48 (MFRQEQPLAEGSFAPMGSLQPEAGNASWNGTEAPGGGARATPYSLQVT) the chain is on the extracellular side. Asn-25 and Asn-29 each carry an N-linked (GlcNAc...) asparagine glycan. A helical membrane pass occupies residues 49–74 (LTLVCLAGLLMLFTVFGNVLVIIAVF). The Cytoplasmic portion of the chain corresponds to 75–85 (TSRALKAPQNL). A helical transmembrane segment spans residues 86–111 (FLVSLASADILVATLVIPFSLANEVM). Residues 112-121 (GYWYFGKAWC) are Extracellular-facing. Cys-121 and Cys-203 are joined by a disulfide. Residues 122–144 (EIYLALDVLFCTSSIVHLCAISL) traverse the membrane as a helical segment. Residues 145 to 164 (DRYWSITQAIEYNLKRTPRR) lie on the Cytoplasmic side of the membrane. Residues 165–188 (IKAIIVTVWVISAVISFPPLISIE) form a helical membrane-spanning segment. Residues 189 to 207 (KKAGGGGQQPAEPRCEIND) lie on the Extracellular side of the membrane. A helical membrane pass occupies residues 208–232 (QKWYVISSCIGSFFAPCLIMILVYV). Over 233 to 389 (RIYQIAKRRT…RQNREKRFTF (157 aa)) the chain is Cytoplasmic. Residues 242-377 (TRVPPSRRGP…RGGVAKASRW (136 aa)) are disordered. Over residues 313-330 (SSEHAERPPGPRRSERGP) the composition is skewed to basic and acidic residues. A Phosphoserine modification is found at Ser-346. Arg-368 is modified (omega-N-methylarginine). The chain crosses the membrane as a helical span at residues 390–414 (VLAVVIGVFVVCWFPFFFTYTLTAV). Topologically, residues 415-424 (GCSVPPTLFK) are extracellular. A helical membrane pass occupies residues 425–445 (FFFWFGYCNSSLNPVIYTIFN). The Cytoplasmic segment spans residues 446–465 (HDFRRAFKKILCRGDRKRIV). A lipid anchor (S-palmitoyl cysteine) is attached at Cys-457.

It belongs to the G-protein coupled receptor 1 family. Adrenergic receptor subfamily. ADRA2A sub-subfamily.

It localises to the cell membrane. In terms of biological role, alpha-2 adrenergic receptors mediate the catecholamine-induced inhibition of adenylate cyclase through the action of G proteins. The protein is Alpha-2A adrenergic receptor of Sus scrofa (Pig).